Here is a 103-residue protein sequence, read N- to C-terminus: Small ribosomal subunit protein uS10 (103 aa).

Belongs to the universal ribosomal protein uS10 family. As to quaternary structure, part of the 30S ribosomal subunit.

Its function is as follows. Involved in the binding of tRNA to the ribosomes. The protein is Small ribosomal subunit protein uS10 of Burkholderia mallei (strain NCTC 10247).